The primary structure comprises 106 residues: Large ribosomal subunit protein uL24 (106 aa).

This sequence belongs to the universal ribosomal protein uL24 family. In terms of assembly, part of the 50S ribosomal subunit.

Its function is as follows. One of two assembly initiator proteins, it binds directly to the 5'-end of the 23S rRNA, where it nucleates assembly of the 50S subunit. Functionally, one of the proteins that surrounds the polypeptide exit tunnel on the outside of the subunit. This chain is Large ribosomal subunit protein uL24, found in Laribacter hongkongensis (strain HLHK9).